A 378-amino-acid chain; its full sequence is Inner membrane protein YibH (378 aa).

At 1–3 the chain is on the periplasmic side; sequence MDL. A helical membrane pass occupies residues 4-24; sequence LIVLTYVALAWAVFKIFRIPV. Over 25-26 the chain is Cytoplasmic; that stretch reads NQ. Residues 27 to 47 traverse the membrane as a helical segment; the sequence is WTLATAALGGVFLVSGLILLM. The Periplasmic portion of the chain corresponds to 48 to 54; that stretch reads NYNHPYT. The helical transmembrane segment at 55–75 threads the bilayer; it reads FTAQKAVIAIPITPQVTGIVT. Residues 76–232 are Cytoplasmic-facing; that stretch reads EVTDKNNQLI…RAPSNGYVTQ (157 aa). Residues 233–253 traverse the membrane as a helical segment; sequence VLIRPGTYAAALPLRPVMVFI. The Periplasmic segment spans residues 254 to 280; sequence PEQKRQIVAQFRQNSLLRLKPGDDAEV. The helical transmembrane segment at 281–301 threads the bilayer; the sequence is VFNALPGQVFHGKLTSILPVV. At 302–309 the chain is on the cytoplasmic side; it reads PGGSYQAQ. The helical transmembrane segment at 310–330 threads the bilayer; it reads GVLQSLTVVPGTDGVLGTIEL. The Periplasmic portion of the chain corresponds to 331–378; it reads DPNDDIDALPDGIYAQVAVYSDHFSHVSVMRKVLLRMTSWMHYLYLDH.

The protein belongs to the membrane fusion protein (MFP) (TC 8.A.1) family.

It is found in the cell inner membrane. The chain is Inner membrane protein YibH (yibH) from Escherichia coli O157:H7.